The primary structure comprises 226 residues: LexA repressor (226 aa).

A DNA-binding region (H-T-H motif) is located at residues 28–48 (RAEICQSLGFRSPNAAESHLR). Residues serine 133 and lysine 170 each act as for autocatalytic cleavage activity in the active site.

This sequence belongs to the peptidase S24 family. Homodimer.

The catalysed reaction is Hydrolysis of Ala-|-Gly bond in repressor LexA.. Functionally, represses a number of genes involved in the response to DNA damage (SOS response), including recA and lexA. In the presence of single-stranded DNA, RecA interacts with LexA causing an autocatalytic cleavage which disrupts the DNA-binding part of LexA, leading to derepression of the SOS regulon and eventually DNA repair. The protein is LexA repressor of Halorhodospira halophila (strain DSM 244 / SL1) (Ectothiorhodospira halophila (strain DSM 244 / SL1)).